The chain runs to 227 residues: Cleavage and polyadenylation specificity factor subunit 5 (227 aa).

The residue at position 2 (serine 2) is an N-acetylserine. The tract at residues 2–147 is necessary for RNA-binding; that stretch reads SVVPPNRSQT…DWVIDDCIGN (146 aa). At arginine 15 the chain carries Omega-N-methylarginine. Residues lysine 23 and lysine 29 each carry the N6-acetyllysine modification. Position 40 is a phosphotyrosine (tyrosine 40). The residue at position 56 (lysine 56) is an N6-acetyllysine. Residues 76 to 201 form the Nudix hydrolase domain; sequence MRRTVEGVLI…KLVAAPLFEL (126 aa). The necessary for interactions with PAPOLA and PABPN1 stretch occupies residues 81 to 160; that stretch reads EGVLIVHEHR…PNFEPPQYPY (80 aa). Residues 102 to 104 form an interaction with RNA region; the sequence is TFF. The short motif at 109–130 is the Nudix box element; it reads GELNPGEDEVEGLKRLMTEILG.

This sequence belongs to the Nudix hydrolase family. CPSF5 subfamily. As to quaternary structure, homodimer (via N- and C-terminus); binds RNA as homodimer. Component of the cleavage factor Im (CFIm) complex which is a heterotetramer composed of two subunits of NUDT21/CPSF5 and two subunits of CPSF6 or CPSF7 or a heterodimer of CPSF6 and CPSF7. The cleavage factor Im (CFIm) complex associates with the CPSF and CSTF complexes to promote the assembly of the core mRNA 3'-processing machinery. Interacts with CPSF6 (via the RRM domain); this interaction is direct and enhances binding to RNA. Interacts with CPSF7. Interacts with FIP1L1; this interaction occurs in a RNA sequence-specific manner. Interacts with PABPN1. Interacts (via N-terminus) with PAPOLA (via C-terminus); this interaction is direct and diminished by acetylation. Interacts with SNRNP70. Interacts with VIRMA. In terms of processing, acetylated mainly by p300/CBP, recruited to the complex by CPSF6. Acetylation decreases interaction with PAPAO. Deacetylated by the class I/II HDACs, HDAC1, HDAC3 and HDAC10, and by the class III HDACs, SIRT1 and SIRT2.

Its subcellular location is the nucleus. The protein localises to the cytoplasm. Component of the cleavage factor Im (CFIm) complex that functions as an activator of the pre-mRNA 3'-end cleavage and polyadenylation processing required for the maturation of pre-mRNA into functional mRNAs. CFIm contributes to the recruitment of multiprotein complexes on specific sequences on the pre-mRNA 3'-end, so called cleavage and polyadenylation signals (pA signals). Most pre-mRNAs contain multiple pA signals, resulting in alternative cleavage and polyadenylation (APA) producing mRNAs with variable 3'-end formation. The CFIm complex acts as a key regulator of cleavage and polyadenylation site choice during APA through its binding to 5'-UGUA-3' elements localized in the 3'-untranslated region (UTR) for a huge number of pre-mRNAs. NUDT21/CPSF5 activates indirectly the mRNA 3'-processing machinery by recruiting CPSF6 and/or CPSF7. Binds to 5'-UGUA-3' elements localized upstream of pA signals that act as enhancers of pre-mRNA 3'-end processing. The homodimer mediates simultaneous sequence-specific recognition of two 5'-UGUA-3' elements within the pre-mRNA. Plays a role in somatic cell fate transitions and pluripotency by regulating widespread changes in gene expression through an APA-dependent function. Binds to chromatin. Binds to, but does not hydrolyze mono- and di-adenosine nucleotides. The chain is Cleavage and polyadenylation specificity factor subunit 5 (NUDT21) from Bos taurus (Bovine).